Consider the following 200-residue polypeptide: Holliday junction resolvase RecU (200 aa).

Mg(2+)-binding residues include threonine 82, aspartate 84, glutamate 97, and glutamine 116.

This sequence belongs to the RecU family. Requires Mg(2+) as cofactor.

The protein localises to the cytoplasm. It carries out the reaction Endonucleolytic cleavage at a junction such as a reciprocal single-stranded crossover between two homologous DNA duplexes (Holliday junction).. In terms of biological role, endonuclease that resolves Holliday junction intermediates in genetic recombination. Cleaves mobile four-strand junctions by introducing symmetrical nicks in paired strands. Promotes annealing of linear ssDNA with homologous dsDNA. Required for DNA repair, homologous recombination and chromosome segregation. This is Holliday junction resolvase RecU from Streptococcus sanguinis (strain SK36).